We begin with the raw amino-acid sequence, 248 residues long: Segregation and condensation protein A (248 aa).

This sequence belongs to the ScpA family. Component of a cohesin-like complex composed of ScpA, ScpB and the Smc homodimer, in which ScpA and ScpB bind to the head domain of Smc. The presence of the three proteins is required for the association of the complex with DNA.

The protein localises to the cytoplasm. Participates in chromosomal partition during cell division. May act via the formation of a condensin-like complex containing Smc and ScpB that pull DNA away from mid-cell into both cell halves. This chain is Segregation and condensation protein A, found in Clostridium perfringens (strain ATCC 13124 / DSM 756 / JCM 1290 / NCIMB 6125 / NCTC 8237 / Type A).